The sequence spans 584 residues: Pentalenolactone D synthase (584 aa).

Residues 55–56 (IG), 77–78 (DG), 85–86 (TW), 97–98 (DV), tyrosine 103, valine 147, and methionine 486 each bind FAD.

Belongs to the FAD-binding monooxygenase family. It depends on FAD as a cofactor.

The enzyme catalyses 1-deoxy-11-oxopentalenate + NADPH + O2 + H(+) = pentalenolactone D + NADP(+) + H2O. Its pathway is antibiotic biosynthesis; pentalenolactone biosynthesis. Functionally, catalyzes the flavin-dependent Baeyer-Villiger oxidation of 1-deoxy-11-oxopentalenic acid to pentalenolactone D in the biosynthesis of pentalenolactone antibiotic. This is Pentalenolactone D synthase (penE) from Streptomyces exfoliatus (Streptomyces hydrogenans).